Here is a 333-residue protein sequence, read N- to C-terminus: Ferrochelatase (333 aa).

Residues H202 and E284 each coordinate Fe cation.

The protein belongs to the ferrochelatase family.

Its subcellular location is the cytoplasm. The enzyme catalyses heme b + 2 H(+) = protoporphyrin IX + Fe(2+). The protein operates within porphyrin-containing compound metabolism; protoheme biosynthesis; protoheme from protoporphyrin-IX: step 1/1. Catalyzes the ferrous insertion into protoporphyrin IX. The sequence is that of Ferrochelatase from Francisella tularensis subsp. tularensis (strain FSC 198).